The sequence spans 466 residues: tRNA-2-methylthio-N(6)-dimethylallyladenosine synthase (466 aa).

The region spanning 3 to 123 (KKLYIKTYGC…LPEMVARAVR (121 aa)) is the MTTase N-terminal domain. [4Fe-4S] cluster-binding residues include Cys12, Cys48, Cys86, Cys162, Cys166, and Cys169. The region spanning 148-381 (SPAGPSAFLS…QQLLTAQQTA (234 aa)) is the Radical SAM core domain. Residues 384–446 (TACVGRVQPV…ANSLSGTVVV (63 aa)) enclose the TRAM domain.

The protein belongs to the methylthiotransferase family. MiaB subfamily. In terms of assembly, monomer. [4Fe-4S] cluster is required as a cofactor.

It is found in the cytoplasm. The enzyme catalyses N(6)-dimethylallyladenosine(37) in tRNA + (sulfur carrier)-SH + AH2 + 2 S-adenosyl-L-methionine = 2-methylsulfanyl-N(6)-dimethylallyladenosine(37) in tRNA + (sulfur carrier)-H + 5'-deoxyadenosine + L-methionine + A + S-adenosyl-L-homocysteine + 2 H(+). Its function is as follows. Catalyzes the methylthiolation of N6-(dimethylallyl)adenosine (i(6)A), leading to the formation of 2-methylthio-N6-(dimethylallyl)adenosine (ms(2)i(6)A) at position 37 in tRNAs that read codons beginning with uridine. The polypeptide is tRNA-2-methylthio-N(6)-dimethylallyladenosine synthase (Rhodospirillum centenum (strain ATCC 51521 / SW)).